The sequence spans 248 residues: Granzyme B (248 aa).

The first 18 residues, 1-18 (MKLLLLLLSFSLAPKTEA), serve as a signal peptide directing secretion. A propeptide spans 19 to 20 (GE) (activation peptide). Residues 21–246 (IIGGHEAKPH…FLSWIKKTMK (226 aa)) form the Peptidase S1 domain. An intrachain disulfide couples Cys50 to Cys66. Residues His65 and Asp109 each act as charge relay system in the active site. Cystine bridges form between Cys143–Cys210 and Cys174–Cys189. Ser204 acts as the Charge relay system in catalysis.

The protein belongs to the peptidase S1 family. Granzyme subfamily.

The protein localises to the secreted. The protein resides in the cytolytic granule. It catalyses the reaction Preferential cleavage: -Asp-|-Xaa- &gt;&gt; -Asn-|-Xaa- &gt; -Met-|-Xaa-, -Ser-|-Xaa-.. Inactivated by the serine protease inhibitor diisopropylfluorophosphate. Its function is as follows. Abundant protease in the cytosolic granules of cytotoxic T-cells and NK-cells which activates caspase-independent pyroptosis when delivered into the target cell through the immunological synapse. It cleaves after Asp. Once delivered into the target cell, acts by catalyzing cleavage of gasdermin-E (GSDME), releasing the pore-forming moiety of GSDME, thereby triggering pyroptosis and target cell death. Seems to be linked to an activation cascade of caspases (aspartate-specific cysteine proteases) responsible for apoptosis execution. Cleaves caspase-3 and -9 (CASP3 and CASP9, respectively) to give rise to active enzymes mediating apoptosis. Cleaves and activates CASP7 in response to bacterial infection, promoting plasma membrane repair. This Rattus norvegicus (Rat) protein is Granzyme B (Gzmb).